Here is a 344-residue protein sequence, read N- to C-terminus: Ferrochelatase (344 aa).

Fe cation-binding residues include H214 and E295.

It belongs to the ferrochelatase family.

It localises to the cytoplasm. It carries out the reaction heme b + 2 H(+) = protoporphyrin IX + Fe(2+). The protein operates within porphyrin-containing compound metabolism; protoheme biosynthesis; protoheme from protoporphyrin-IX: step 1/1. Catalyzes the ferrous insertion into protoporphyrin IX. The protein is Ferrochelatase of Rhizobium johnstonii (strain DSM 114642 / LMG 32736 / 3841) (Rhizobium leguminosarum bv. viciae).